Reading from the N-terminus, the 210-residue chain is Peroxynitrite isomerase (210 aa).

Residues 21-27 carry the GXWXGXG motif; sequence GQWEGQG. His-190 lines the heme b pocket.

This sequence belongs to the nitrobindin family. In terms of assembly, homodimer. It depends on heme b as a cofactor.

The enzyme catalyses peroxynitrite = nitrate. It participates in nitrogen metabolism. Its function is as follows. Heme-binding protein able to scavenge peroxynitrite and to protect free L-tyrosine against peroxynitrite-mediated nitration, by acting as a peroxynitrite isomerase that converts peroxynitrite to nitrate. Therefore, this protein likely plays a role in peroxynitrite sensing and in the detoxification of reactive nitrogen and oxygen species (RNS and ROS, respectively). Is able to bind nitric oxide (NO) in vitro, but may act as a sensor of peroxynitrite levels in vivo. The polypeptide is Peroxynitrite isomerase (Renibacterium salmoninarum (strain ATCC 33209 / DSM 20767 / JCM 11484 / NBRC 15589 / NCIMB 2235)).